We begin with the raw amino-acid sequence, 237 residues long: Deoxyribose-phosphate aldolase (237 aa).

Asp-94 (proton donor/acceptor) is an active-site residue. The active-site Schiff-base intermediate with acetaldehyde is Lys-158. The active-site Proton donor/acceptor is Lys-187.

It belongs to the DeoC/FbaB aldolase family. DeoC type 1 subfamily.

The protein localises to the cytoplasm. It carries out the reaction 2-deoxy-D-ribose 5-phosphate = D-glyceraldehyde 3-phosphate + acetaldehyde. It functions in the pathway carbohydrate degradation; 2-deoxy-D-ribose 1-phosphate degradation; D-glyceraldehyde 3-phosphate and acetaldehyde from 2-deoxy-alpha-D-ribose 1-phosphate: step 2/2. Its function is as follows. Catalyzes a reversible aldol reaction between acetaldehyde and D-glyceraldehyde 3-phosphate to generate 2-deoxy-D-ribose 5-phosphate. The sequence is that of Deoxyribose-phosphate aldolase from Lactobacillus acidophilus (strain ATCC 700396 / NCK56 / N2 / NCFM).